Consider the following 536-residue polypeptide: Arginine--tRNA ligase (536 aa).

Residues 119–129 (ANPTGFLHIGH) carry the 'HIGH' region motif.

This sequence belongs to the class-I aminoacyl-tRNA synthetase family. Monomer.

It localises to the cytoplasm. It catalyses the reaction tRNA(Arg) + L-arginine + ATP = L-arginyl-tRNA(Arg) + AMP + diphosphate. In Mycoplasma mobile (strain ATCC 43663 / 163K / NCTC 11711) (Mesomycoplasma mobile), this protein is Arginine--tRNA ligase.